Here is a 570-residue protein sequence, read N- to C-terminus: MSVRAVGSRLFKHGRSLIQQFCKRDLNTTIGDKINAVSQATAAPSSLPKTQIPKNFALRNVGVQLGLQARRILIDNVLNRVTNSLSAELRKKATRRILFGDSAPFFALVGVSIASGTGILTKEEELEGVCWEIREAISKIKWQYYDIDESRFESNPITLNDLSLGKPIAKGTNGVVYSAKVKDDETDDNKYPFALKMMFNYDIQSNSMEILKAMYRETVPARMYYSNHDLNNWEIELANRRKHLPPHPNIVAIFSVFTDLIQELEGSKDLYPAALPPRLHPEGEGRNMSLFLLMKRYDCNLQSFLSTAPSTRTSLLLLAQLLEGVAHMTAHGIAHRDLKSDNLLLDTSEPESPILVISDFGCCLADKTNGLSLPYTSYEMDKGGNTALMAPEIICQKPGTFSVLNYSKADLWAVGAIAYEIFNCHNPFYGPSRLKNFNYKEGDLPKLPDEVPTVIQALVANLLKRNPNKRLDPEVAANVCQLFLWAPSTWLKPGLKVPTSGEILQWLLSLTTKVLCEGKINNKSFGEKFTRNWRRTYPEYLLISSFLCRAKLANVRNALHWIQENLPELD.

A mitochondrion-targeting transit peptide spans Met-1 to Ala-5. At Val-6–Arg-96 the chain is on the mitochondrial intermembrane side. The helical transmembrane segment at Ile-97–Leu-120 threads the bilayer. The Cytoplasmic segment spans residues Thr-121–Asp-570. The Protein kinase domain maps to Leu-162–Leu-484. An ATP-binding site is contributed by Lys-196. A Phosphoserine; by autocatalysis modification is found at Ser-205. Residue Glu-217 coordinates Mg(2+). Residues Lys-295, Tyr-297, and Asn-300 each coordinate ATP. The Proton acceptor role is filled by Asp-337. An ATP-binding site is contributed by Asp-341. Asn-342 and Asp-359 together coordinate Mg(2+). Asp-359 provides a ligand contact to ATP. At Ser-377 the chain carries Phosphoserine; by autocatalysis. Thr-386 bears the Phosphothreonine; by autocatalysis mark. Thr-530 is modified (phosphothreonine).

This sequence belongs to the protein kinase superfamily. Ser/Thr protein kinase family. Requires Mg(2+) as cofactor. Proteolytically cleaved. In healthy cells, the precursor is continuously imported into mitochondria where it is proteolytically cleaved into its short form by the mitochondrial rhomboid protease rho-7 (TcasGA2_TC013516). The short form is then released into the cytosol where it rapidly undergoes proteasome-dependent degradation. In unhealthy cells, when cellular stress conditions lead to the loss of mitochondrial membrane potential, mitochondrial import is impaired leading to the precursor accumulating on the outer mitochondrial membrane (OMM). Post-translationally, autophosphorylated on Ser-205, which activates kinase activity and is required for substrate recognition. Loss of mitochondrial membrane potential results in the precursor accumulating on the outer mitochondrial membrane (OMM) where it is activated by autophosphorylation at Ser-205. Autophosphorylation is sufficient and essential for selective recruitment of park to depolarized mitochondria, likely via Pink1-dependent phosphorylation of polyubiquitin chains. Also autophosphorylated at Ser-377, Thr-386 and possibly Thr-530. Another report found evidence of autophosphorylation at Ser-154, Thr-186, Thr-218, Ser-267 and Thr-530, as well as a number of other minor sites, but determined that phosphorylation at these sites is not required for enzyme activity and may not occur in vivo.

The protein localises to the mitochondrion outer membrane. It is found in the mitochondrion inner membrane. Its subcellular location is the cytoplasm. The protein resides in the cytosol. The enzyme catalyses L-seryl-[protein] + ATP = O-phospho-L-seryl-[protein] + ADP + H(+). It carries out the reaction L-threonyl-[protein] + ATP = O-phospho-L-threonyl-[protein] + ADP + H(+). Functionally, acts as a serine/threonine-protein kinase. Exhibits a substrate preference for proline at position P+1 and a general preference at several residues for basic residues such as arginine. Also exhibits moderate preferences for a phosphotyrosine at position P-3 and a tryptophan at P-5. Critical to mitochondrial homeostasis it mediates several pathways that maintain mitochondrial health and function. Protects against mitochondrial dysfunction during cellular stress by phosphorylating mitochondrial proteins such as park and likely Drp1, to coordinate mitochondrial quality control mechanisms that remove and replace dysfunctional mitochondrial components. Depending on the severity of mitochondrial damage and/or dysfunction, activity ranges from preventing apoptosis and stimulating mitochondrial biogenesis to regulating mitochondrial dynamics and eliminating severely damaged mitochondria via mitophagy. Appears to be particularly important in maintaining the physiology and function of cells with high energy demands that are undergoing stress or altered metabolic environment, including spermatids, muscle cells and neurons such as the dopaminergic (DA) neurons. Mediates the translocation and activation of park at the outer membrane (OMM) of dysfunctional/depolarized mitochondria. At the OMM of damaged mitochondria, phosphorylates pre-existing polyubiquitin chains, the Pink1-phosphorylated polyubiquitin then recruits park from the cytosol to the OMM where park is fully activated by phosphorylation at 'Ser-80' by Pink1. When cellular stress results in irreversible mitochondrial damage, functions with park to promote the clearance of dysfunctional and/or depolarized mitochondria by selective autophagy (mitophagy). The Pink1-park pathway also promotes fission and/or inhibits fusion of damaged mitochondria, by phosphorylating and thus promoting the park-dependent degradation of proteins involved in mitochondrial fusion/fission such as Marf, Opa1 and fzo. This prevents the refusion of unhealthy mitochondria with the mitochondrial network or initiates mitochondrial fragmentation facilitating their later engulfment by autophagosomes. Also likely to promote mitochondrial fission independently of park and Atg7-mediated mitophagy, via the phosphorylation and activation of Drp1. Regulates motility of damaged mitochondria by phosphorylating Miro which likely promotes its park-dependent degradation by the proteasome; in motor neurons, this inhibits mitochondrial intracellular anterograde transport along the axons which probably increases the chance of the mitochondria being eliminated in the soma. The Pink1-park pathway is also involved in mitochondrial regeneration processes such as promoting mitochondrial biogenesis, activating localized mitochondrial repair, promoting selective turnover of mitochondrial proteins and initiating the mitochondrial import of endogenous proteins. Involved in mitochondrial biogenesis by promoting the park-dependent ubiquitination of transcriptional repressor Paris which leads to its subsequent proteasomal degradation and allows activation of the transcription factor srl. Functions with park to promote localized mitochondrial repair by activating the translation of specific nuclear-encoded mitochondrial RNAs (nc-mtRNAs) on the mitochondrial surface, including several key electron transport chain component nc-mtRNAs. During oogenesis, phosphorylates and inactivates larp on the membrane of defective mitochondria, thus impairing local translation and mtDNA replication and consequently, reducing transmission of deleterious mtDNA mutations to the mature oocyte. Phosphorylates the mitochondrial acyl-CoA dehydrogenase Mcad, and appears to be important for maintaining fatty acid and amino acid metabolism via a mechanism that is independent of it's role in maintaining production of ATP. This is Serine/threonine-protein kinase Pink1, mitochondrial from Tribolium castaneum (Red flour beetle).